A 320-amino-acid chain; its full sequence is Methionyl-tRNA formyltransferase (320 aa).

111 to 114 (SLLP) serves as a coordination point for (6S)-5,6,7,8-tetrahydrofolate.

The protein belongs to the Fmt family.

It carries out the reaction L-methionyl-tRNA(fMet) + (6R)-10-formyltetrahydrofolate = N-formyl-L-methionyl-tRNA(fMet) + (6S)-5,6,7,8-tetrahydrofolate + H(+). Its function is as follows. Attaches a formyl group to the free amino group of methionyl-tRNA(fMet). The formyl group appears to play a dual role in the initiator identity of N-formylmethionyl-tRNA by promoting its recognition by IF2 and preventing the misappropriation of this tRNA by the elongation apparatus. The protein is Methionyl-tRNA formyltransferase of Methylacidiphilum infernorum (isolate V4) (Methylokorus infernorum (strain V4)).